A 657-amino-acid chain; its full sequence is Glycogen debranching enzyme (657 aa).

The active-site Nucleophile is the D336. E371 (proton donor) is an active-site residue. A disordered region spans residues 460-479 (ANGEENRDGTNNNYSNNHGK).

The protein belongs to the glycosyl hydrolase 13 family.

It carries out the reaction Hydrolysis of (1-&gt;6)-alpha-D-glucosidic linkages to branches with degrees of polymerization of three or four glucose residues in limit dextrin.. Its pathway is glycan degradation; glycogen degradation. Its function is as follows. Removes maltotriose and maltotetraose chains that are attached by 1,6-alpha-linkage to the limit dextrin main chain, generating a debranched limit dextrin. This chain is Glycogen debranching enzyme, found in Shigella dysenteriae serotype 1 (strain Sd197).